The primary structure comprises 145 residues: Alpha-amylase/trypsin inhibitor CM1 (145 aa).

Residues 1–25 form the signal peptide; that stretch reads MASKSSISPLLLATVLVSVFAAATA.

Belongs to the protease inhibitor I6 (cereal trypsin/alpha-amylase inhibitor) family. As to quaternary structure, subunit of the tetrameric inhibitor. In terms of tissue distribution, endosperm.

It localises to the secreted. In terms of biological role, alpha-amylase/trypsin inhibitor. It could be involved in insect defense mechanisms. The polypeptide is Alpha-amylase/trypsin inhibitor CM1 (Triticum aestivum (Wheat)).